We begin with the raw amino-acid sequence, 178 residues long: Crossover junction endodeoxyribonuclease RuvC (178 aa).

Catalysis depends on residues Asp11, Glu71, and Asp143. Residues Asp11, Glu71, and Asp143 each coordinate Mg(2+).

The protein belongs to the RuvC family. Homodimer which binds Holliday junction (HJ) DNA. The HJ becomes 2-fold symmetrical on binding to RuvC with unstacked arms; it has a different conformation from HJ DNA in complex with RuvA. In the full resolvosome a probable DNA-RuvA(4)-RuvB(12)-RuvC(2) complex forms which resolves the HJ. The cofactor is Mg(2+).

It localises to the cytoplasm. It catalyses the reaction Endonucleolytic cleavage at a junction such as a reciprocal single-stranded crossover between two homologous DNA duplexes (Holliday junction).. Its function is as follows. The RuvA-RuvB-RuvC complex processes Holliday junction (HJ) DNA during genetic recombination and DNA repair. Endonuclease that resolves HJ intermediates. Cleaves cruciform DNA by making single-stranded nicks across the HJ at symmetrical positions within the homologous arms, yielding a 5'-phosphate and a 3'-hydroxyl group; requires a central core of homology in the junction. The consensus cleavage sequence is 5'-(A/T)TT(C/G)-3'. Cleavage occurs on the 3'-side of the TT dinucleotide at the point of strand exchange. HJ branch migration catalyzed by RuvA-RuvB allows RuvC to scan DNA until it finds its consensus sequence, where it cleaves and resolves the cruciform DNA. This is Crossover junction endodeoxyribonuclease RuvC from Neisseria meningitidis serogroup A / serotype 4A (strain DSM 15465 / Z2491).